We begin with the raw amino-acid sequence, 608 residues long: ATP-citrate synthase beta chain protein 1 (608 aa).

ATP is bound by residues 214–234 (ILRF…ELGG) and 265–291 (FKSE…KNQA). Glu-231 lines the Mg(2+) pocket. His-273 acts as the Tele-phosphohistidine intermediate in catalysis. 292 to 302 (LQDAGATVPTS) is a CoA binding site.

This sequence belongs to the succinate/malate CoA ligase alpha subunit family. Heterooctamer of 4 alpha and 4 beta chains.

It is found in the cytoplasm. It localises to the cytosol. The catalysed reaction is oxaloacetate + acetyl-CoA + ADP + phosphate = citrate + ATP + CoA. ATP citrate-lyase is the primary enzyme responsible for the synthesis of cytosolic acetyl-CoA, used for the elongation of fatty acids and biosynthesis of isoprenoids, flavonoids and malonated derivatives. May supply substrate to the cytosolic acetyl-CoA carboxylase, which generates the malonyl-CoA used for the synthesis of a multitude of compounds, including very long chain fatty acids and flavonoids. Required for normal growth and development and elongation of C18 fatty acids to C20 to C24 fatty acids in seeds. In contrast to all known animal ACL enzymes having a homomeric structure, plant ACLs are composed of alpha and beta chains. This Arabidopsis thaliana (Mouse-ear cress) protein is ATP-citrate synthase beta chain protein 1 (ACLB-1).